The following is a 450-amino-acid chain: 3-phosphoshikimate 1-carboxyvinyltransferase (450 aa).

Residues 1-26 (MSGHGTPIPMTSRRASPLKGEAHVPG) form a disordered region. Residues K28, S29, and R33 each contribute to the 3-phosphoshikimate site. K28 is a binding site for phosphoenolpyruvate. Residues G101 and R129 each coordinate phosphoenolpyruvate. 4 residues coordinate 3-phosphoshikimate: S174, Q176, D327, and K354. Q176 provides a ligand contact to phosphoenolpyruvate. D327 (proton acceptor) is an active-site residue. Phosphoenolpyruvate-binding residues include R358 and R403.

Belongs to the EPSP synthase family. Monomer.

It is found in the cytoplasm. The enzyme catalyses 3-phosphoshikimate + phosphoenolpyruvate = 5-O-(1-carboxyvinyl)-3-phosphoshikimate + phosphate. The protein operates within metabolic intermediate biosynthesis; chorismate biosynthesis; chorismate from D-erythrose 4-phosphate and phosphoenolpyruvate: step 6/7. Catalyzes the transfer of the enolpyruvyl moiety of phosphoenolpyruvate (PEP) to the 5-hydroxyl of shikimate-3-phosphate (S3P) to produce enolpyruvyl shikimate-3-phosphate and inorganic phosphate. The protein is 3-phosphoshikimate 1-carboxyvinyltransferase of Ruegeria sp. (strain TM1040) (Silicibacter sp.).